The primary structure comprises 79 residues: RNA-binding protein Hfq (79 aa).

The region spanning 10–70 (DVFLNTVRKQ…ISTIMPGQPV (61 aa)) is the Sm domain.

It belongs to the Hfq family. Homohexamer.

RNA chaperone that binds small regulatory RNA (sRNAs) and mRNAs to facilitate mRNA translational regulation in response to envelope stress, environmental stress and changes in metabolite concentrations. Also binds with high specificity to tRNAs. The sequence is that of RNA-binding protein Hfq from Bartonella quintana (strain Toulouse) (Rochalimaea quintana).